Here is a 312-residue protein sequence, read N- to C-terminus: DNA-directed RNA polymerase subunit alpha (312 aa).

Positions 1–226 (MIEFKKPNIT…EHFKAFESAD (226 aa)) are alpha N-terminal domain (alpha-NTD). The tract at residues 243–312 (KEKKLEMTIE…DLGLSLRQED (70 aa)) is alpha C-terminal domain (alpha-CTD).

It belongs to the RNA polymerase alpha chain family. In terms of assembly, homodimer. The RNAP catalytic core consists of 2 alpha, 1 beta, 1 beta' and 1 omega subunit. When a sigma factor is associated with the core the holoenzyme is formed, which can initiate transcription.

It catalyses the reaction RNA(n) + a ribonucleoside 5'-triphosphate = RNA(n+1) + diphosphate. Its function is as follows. DNA-dependent RNA polymerase catalyzes the transcription of DNA into RNA using the four ribonucleoside triphosphates as substrates. This chain is DNA-directed RNA polymerase subunit alpha, found in Lactobacillus delbrueckii subsp. bulgaricus (strain ATCC 11842 / DSM 20081 / BCRC 10696 / JCM 1002 / NBRC 13953 / NCIMB 11778 / NCTC 12712 / WDCM 00102 / Lb 14).